The sequence spans 128 residues: Protein ripply2 (128 aa).

Residues 1–64 (MDTTESAESA…ALPSGPGMAE (64 aa)) are disordered. Over residues 17–28 (PSRSRCPPSAQP) the composition is skewed to low complexity. The WRPW motif motif lies at 34-37 (WRPW). The segment at 74–109 (HPVRLFWPKSKCYDYLYQEAETLLKNFPIQATISFY) is ripply homology domain.

It belongs to the ripply family. In terms of tissue distribution, expressed in the embryonic anterior presomitic mesoderm. First expressed in S-I at 8.5 dpc, where expression is maintained until 13.5 dpc, with an additional stripe of expression sometimes seen in the rostral part of S0 and S-I.

Its subcellular location is the nucleus. Functionally, plays a role in somitogenesis. Required for somite segregation and establishment of rostrocaudal polarity in somites. The chain is Protein ripply2 from Mus musculus (Mouse).